Here is a 177-residue protein sequence, read N- to C-terminus: UPF0177 protein YxdF (177 aa).

A run of 4 helical transmembrane segments spans residues 2–22 (TLVLILIFIIAWKLGYLKNTL), 30–50 (IFWLMGIVFFTLATNYLVTVL), 117–137 (ALVHTGFSWYLLPYLILSFII), and 152–172 (IVHSSVNLFGGSAIKLLDTFF).

It belongs to the UPF0177 family.

It is found in the cell membrane. The protein is UPF0177 protein YxdF (yxdF) of Lactococcus lactis subsp. lactis (strain IL1403) (Streptococcus lactis).